We begin with the raw amino-acid sequence, 494 residues long: MKSLAPGIKLITSFSRDSWYRFSILFLTFVFYTSYHLSRKPISIVKSQLHRNCSNVVHPANLNITDNDTWCDWVPFDGKNYQNLFGVLDNCFLVAYAVGMFFSGIFGERLPLRYYLSTGMLLSGLFTALFGLGFYWQIHSLWYYCLVQALNGLVQTTGWPAVVACVGNWFGKGKRGFIMGVWNSHTSVGNILGSLIAGVYVSSAWGLSFIVPGIIIASTGVICFLFLVERPEDVNCTAPQHHERVEEEPLLRNSSTNEEIFNSHTSTAVEPVEDHSEAISFCGALRIPGVVEFSLCLLFAKLVSYTFLYWLPLYIANVAHFDPKKAGDLSTLFDVGGILGGIVAGLVSDYTGGRASTCCAMLIIAAPMLFLYNKIGQNGLPTTVGMLLWCGALVNGPYALITTAVSADLGTHECLRGNSRALSTVTAIIDGTGSIGAAVGPLLAGLISPTGWNNVFYMLIAADVLACLLLSRLVYKEIRGWCGYTTRQRGFKEI.

A helical membrane pass occupies residues 20–37 (YRFSILFLTFVFYTSYHL). Residues asparagine 52, asparagine 63, and asparagine 67 are each glycosylated (N-linked (GlcNAc...) asparagine). 11 helical membrane passes run 85–105 (FGVLDNCFLVAYAVGMFFSGI), 116–136 (LSTGMLLSGLFTALFGLGFYW), 146–166 (LVQALNGLVQTTGWPAVVACV), 187–207 (SVGNILGSLIAGVYVSSAWGL), 208–228 (SFIVPGIIIASTGVICFLFLV), 295–315 (LCLLFAKLVSYTFLYWLPLYI), 327–347 (GDLSTLFDVGGILGGIVAGLV), 355–375 (ASTCCAMLIIAAPMLFLYNKI), 384–404 (VGMLLWCGALVNGPYALITTA), 427–447 (AIIDGTGSIGAAVGPLLAGLI), and 455–475 (VFYMLIAADVLACLLLSRLVY).

Belongs to the major facilitator superfamily. Organophosphate:Pi antiporter (OPA) (TC 2.A.1.4) family.

The protein localises to the endoplasmic reticulum membrane. The catalysed reaction is D-glucose 6-phosphate(in) + phosphate(out) = D-glucose 6-phosphate(out) + phosphate(in). Inorganic phosphate and glucose-6-phosphate antiporter. May transport cytoplasmic glucose-6-phosphate into the lumen of the endoplasmic reticulum and translocate inorganic phosphate into the opposite direction. This Danio rerio (Zebrafish) protein is Glucose-6-phosphate exchanger SLC37A2.